Consider the following 219-residue polypeptide: Probable glutathione S-transferase MSR-1 (219 aa).

Residues 4–83 (NNVVLLDFSG…YIDEVWHEKC (80 aa)) form the GST N-terminal domain. Residues Ser14, Lys41, Ile55, and 67–68 (ES) each bind glutathione. One can recognise a GST C-terminal domain in the interval 89 to 208 (DPYQRSQARF…LPHPHKIYDF (120 aa)).

Belongs to the GST superfamily. HSP26 family.

The catalysed reaction is RX + glutathione = an S-substituted glutathione + a halide anion + H(+). Its function is as follows. May play an important role in hormonal and growth regulatory responses. The sequence is that of Probable glutathione S-transferase MSR-1 (MSR-1) from Nicotiana plumbaginifolia (Leadwort-leaved tobacco).